Reading from the N-terminus, the 474-residue chain is tRNA-2-methylthio-N(6)-dimethylallyladenosine synthase (474 aa).

In terms of domain architecture, MTTase N-terminal spans 3–120; sequence KKLHIKTWGC…LPEMINSVRG (118 aa). [4Fe-4S] cluster is bound by residues C12, C49, C83, C157, C161, and C164. Residues 143 to 375 enclose the Radical SAM core domain; it reads RAEGPTAFVS…QERINQQAMA (233 aa). The TRAM domain maps to 378-441; sequence RRMLGTTQRI…PNSLRGKVVR (64 aa).

This sequence belongs to the methylthiotransferase family. MiaB subfamily. Monomer. Requires [4Fe-4S] cluster as cofactor.

Its subcellular location is the cytoplasm. The enzyme catalyses N(6)-dimethylallyladenosine(37) in tRNA + (sulfur carrier)-SH + AH2 + 2 S-adenosyl-L-methionine = 2-methylsulfanyl-N(6)-dimethylallyladenosine(37) in tRNA + (sulfur carrier)-H + 5'-deoxyadenosine + L-methionine + A + S-adenosyl-L-homocysteine + 2 H(+). Functionally, catalyzes the methylthiolation of N6-(dimethylallyl)adenosine (i(6)A), leading to the formation of 2-methylthio-N6-(dimethylallyl)adenosine (ms(2)i(6)A) at position 37 in tRNAs that read codons beginning with uridine. This chain is tRNA-2-methylthio-N(6)-dimethylallyladenosine synthase, found in Escherichia coli (strain SE11).